A 158-amino-acid polypeptide reads, in one-letter code: Small ribosomal subunit protein uS17 (158 aa).

Ala-2 carries the N-acetylalanine modification. Arg-22 carries the post-translational modification Citrulline. 3 positions are modified to N6-acetyllysine: Lys-38, Lys-45, and Lys-58. The S-palmitoyl cysteine moiety is linked to residue Cys-60. The residue at position 67 (Ser-67) is a Phosphoserine. Position 69 is an omega-N-methylarginine (Arg-69). Ser-110 carries the post-translational modification Phosphoserine.

It belongs to the universal ribosomal protein uS17 family. In terms of assembly, component of the small ribosomal subunit. Part of the small subunit (SSU) processome, composed of more than 70 proteins and the RNA chaperone small nucleolar RNA (snoRNA) U3. In terms of processing, citrullinated by PADI4.

It localises to the cytoplasm. Its subcellular location is the nucleus. The protein resides in the nucleolus. Component of the small ribosomal subunit. The ribosome is a large ribonucleoprotein complex responsible for the synthesis of proteins in the cell. Part of the small subunit (SSU) processome, first precursor of the small eukaryotic ribosomal subunit. During the assembly of the SSU processome in the nucleolus, many ribosome biogenesis factors, an RNA chaperone and ribosomal proteins associate with the nascent pre-rRNA and work in concert to generate RNA folding, modifications, rearrangements and cleavage as well as targeted degradation of pre-ribosomal RNA by the RNA exosome. In Canis lupus familiaris (Dog), this protein is Small ribosomal subunit protein uS17 (RPS11).